The following is a 566-amino-acid chain: Oxygen-dependent choline dehydrogenase (566 aa).

7-36 provides a ligand contact to FAD; the sequence is DYIICGAGSAGNVLATRLTEDPNVTVLLLE. Residues 182-204 form a disordered region; the sequence is YQQEGFGPMDRTVTPKGRRASTA. Histidine 474 serves as the catalytic Proton acceptor.

Belongs to the GMC oxidoreductase family. Requires FAD as cofactor.

The enzyme catalyses choline + A = betaine aldehyde + AH2. It carries out the reaction betaine aldehyde + NAD(+) + H2O = glycine betaine + NADH + 2 H(+). It participates in amine and polyamine biosynthesis; betaine biosynthesis via choline pathway; betaine aldehyde from choline (cytochrome c reductase route): step 1/1. Its function is as follows. Involved in the biosynthesis of the osmoprotectant glycine betaine. Catalyzes the oxidation of choline to betaine aldehyde and betaine aldehyde to glycine betaine at the same rate. This Burkholderia multivorans (strain ATCC 17616 / 249) protein is Oxygen-dependent choline dehydrogenase.